The sequence spans 218 residues: Protein-L-isoaspartate O-methyltransferase (218 aa).

S63 is a catalytic residue.

The protein belongs to the methyltransferase superfamily. L-isoaspartyl/D-aspartyl protein methyltransferase family.

The protein resides in the cytoplasm. The enzyme catalyses [protein]-L-isoaspartate + S-adenosyl-L-methionine = [protein]-L-isoaspartate alpha-methyl ester + S-adenosyl-L-homocysteine. Functionally, catalyzes the methyl esterification of L-isoaspartyl residues in peptides and proteins that result from spontaneous decomposition of normal L-aspartyl and L-asparaginyl residues. It plays a role in the repair and/or degradation of damaged proteins. The sequence is that of Protein-L-isoaspartate O-methyltransferase from Syntrophus aciditrophicus (strain SB).